A 133-amino-acid chain; its full sequence is Holo-[acyl-carrier-protein] synthase (133 aa).

Mg(2+)-binding residues include aspartate 8 and glutamate 64.

The protein belongs to the P-Pant transferase superfamily. AcpS family. Mg(2+) serves as cofactor.

The protein resides in the cytoplasm. The catalysed reaction is apo-[ACP] + CoA = holo-[ACP] + adenosine 3',5'-bisphosphate + H(+). Transfers the 4'-phosphopantetheine moiety from coenzyme A to a Ser of acyl-carrier-protein. The sequence is that of Holo-[acyl-carrier-protein] synthase from Shewanella loihica (strain ATCC BAA-1088 / PV-4).